A 427-amino-acid chain; its full sequence is Histidine--tRNA ligase (427 aa).

The protein belongs to the class-II aminoacyl-tRNA synthetase family. As to quaternary structure, homodimer.

The protein localises to the cytoplasm. The catalysed reaction is tRNA(His) + L-histidine + ATP = L-histidyl-tRNA(His) + AMP + diphosphate + H(+). The polypeptide is Histidine--tRNA ligase (Mannheimia succiniciproducens (strain KCTC 0769BP / MBEL55E)).